A 1212-amino-acid chain; its full sequence is Peregrin (1212 aa).

A C2H2-type zinc finger spans residues Y21–H47. Disordered stretches follow at residues Y43–R87 and V118–P176. Over residues L58–Q67 the composition is skewed to basic residues. An interaction with KAT6A and KAT6B region spans residues R59–Y221. Positions Q74 to P85 are enriched in low complexity. Acidic residues predominate over residues V119–P130. S120 carries the phosphoserine modification. K147 bears the N6-acetyllysine mark. Residues S148–S166 are compositionally biased toward basic residues. Residue S237 is modified to Phosphoserine. Residues D272–S322 form a PHD-type 1 zinc finger. The C2HC pre-PHD-type zinc-finger motif lies at A326–V359. The segment at L383–T447 adopts a PHD-type 2 zinc-finger fold. The segment at T447–S489 is disordered. Phosphoserine occurs at positions 459 and 461. The span at G463–E473 shows a compositional bias: acidic residues. An interaction with MEAF6 and ING5 region spans residues L500–R819. The tract at residues Y542–E1077 is required for RUNX1 and RUNX2 transcriptional activation. An N6-acetyllysine modification is found at K579. The Bromo domain occupies M627–A731. The interval L817–S1060 is disordered. Residues H823 to G836 are compositionally biased toward basic and acidic residues. Position 856 is a phosphothreonine (T856). Residues T856–S869 show a composition bias toward low complexity. Residues S858, S915, S920, and S924 each carry the phosphoserine modification. The span at P993–S1019 shows a compositional bias: low complexity. S1074 is subject to Phosphoserine. Residues A1083–N1166 enclose the PWWP domain. S1185 is subject to Phosphoserine.

Component of some HBO1 complex composed of KAT7/HBO1, MEAF6, ING5, and BRPF1. Component of the MOZ/MORF complex composed at least of ING5, KAT6A, KAT6B, MEAF6 and one of BRPF1, BRD1/BRPF2 and BRPF3. Interacts (via PHD-type zinc finger domains) with unmethylated histone H3 at 'Lys-4' (H3K4me0). Interacts with trimethylated 'Lys-36' of histone H3 (H3K36me3). Interacts with ING5; interaction directs BRPF1 to H4K4me3-enriched chromatin at the 5' of active genes. Interacts with KAT7. Acetylated by KAT6A. As to expression, expressed at low level in most tissues, with high expression in the testis and specific regions of the brain.

It localises to the nucleus. Its subcellular location is the chromosome. The protein resides in the cytoplasm. In terms of biological role, scaffold subunit of various histone acetyltransferase (HAT) complexes, such as the MOZ/MORF and HBO1 complexes, which have a histone H3 acetyltransferase activity. Plays a key role in HBO1 complex by directing KAT7/HBO1 specificity towards histone H3 'Lys-14' acetylation (H3K14ac). Some HAT complexes preferentially mediate histone H3 'Lys-23' (H3K23ac) acetylation. Positively regulates the transcription of RUNX1 and RUNX2. This chain is Peregrin, found in Mus musculus (Mouse).